A 286-amino-acid polypeptide reads, in one-letter code: B3 domain-containing protein REM11 (286 aa).

Residues 1–70 (MAWNLAIITL…TPMLSLVSTQ (70 aa)) constitute a DNA-binding region (TF-B3 1). Residues 68–114 (STQSTSHKSQKRECSKHSEKESISAVPSKGKKNRKARSNREERRDSS) form a disordered region. Over residues 78–89 (KRECSKHSEKES) the composition is skewed to basic and acidic residues. Residues 119-219 (NRFVTFTPED…RAQVCFYGVF (101 aa)) constitute a DNA-binding region (TF-B3 2).

Its subcellular location is the nucleus. The sequence is that of B3 domain-containing protein REM11 (REM11) from Arabidopsis thaliana (Mouse-ear cress).